The primary structure comprises 392 residues: Protein FAM53C (392 aa).

Met-1 is subject to N-acetylmethionine. Residues Leu-78 to Arg-119 are disordered. Over residues Arg-83 to Ser-93 the composition is skewed to polar residues. Residues Ser-122, Ser-162, Ser-232, Ser-234, Ser-255, and Ser-273 each carry the phosphoserine modification. Disordered regions lie at residues Leu-141–Val-167 and Arg-204–Arg-294. Residues Ala-241–Pro-256 are compositionally biased toward low complexity. Basic and acidic residues predominate over residues Leu-278 to Arg-294. Phosphoserine is present on Ser-299. The disordered stretch occupies residues Ala-341–Val-364.

Belongs to the FAM53 family.

The chain is Protein FAM53C from Homo sapiens (Human).